Here is a 314-residue protein sequence, read N- to C-terminus: DNA-directed RNA polymerase subunit alpha (314 aa).

The segment at 1-228 (MIEIEKPKIE…EHLNIFVGLT (228 aa)) is alpha N-terminal domain (alpha-NTD). Positions 245-314 (KEKVLEMTIE…ELGLGLRKDD (70 aa)) are alpha C-terminal domain (alpha-CTD).

The protein belongs to the RNA polymerase alpha chain family. In terms of assembly, homodimer. The RNAP catalytic core consists of 2 alpha, 1 beta, 1 beta' and 1 omega subunit. When a sigma factor is associated with the core the holoenzyme is formed, which can initiate transcription.

It carries out the reaction RNA(n) + a ribonucleoside 5'-triphosphate = RNA(n+1) + diphosphate. In terms of biological role, DNA-dependent RNA polymerase catalyzes the transcription of DNA into RNA using the four ribonucleoside triphosphates as substrates. In Bacillus licheniformis (strain ATCC 14580 / DSM 13 / JCM 2505 / CCUG 7422 / NBRC 12200 / NCIMB 9375 / NCTC 10341 / NRRL NRS-1264 / Gibson 46), this protein is DNA-directed RNA polymerase subunit alpha.